A 457-amino-acid polypeptide reads, in one-letter code: Cysteine--tRNA ligase (457 aa).

Position 27 (cysteine 27) interacts with Zn(2+). Residues 29-39 carry the 'HIGH' region motif; it reads ITPQSEPHIGH. The Zn(2+) site is built by cysteine 207, histidine 232, and glutamate 236. The 'KMSKS' region motif lies at 265-269; that stretch reads KMSKS. Residue lysine 268 participates in ATP binding.

The protein belongs to the class-I aminoacyl-tRNA synthetase family. Monomer. Requires Zn(2+) as cofactor.

It is found in the cytoplasm. It carries out the reaction tRNA(Cys) + L-cysteine + ATP = L-cysteinyl-tRNA(Cys) + AMP + diphosphate. The sequence is that of Cysteine--tRNA ligase from Dehalococcoides mccartyi (strain ATCC BAA-2100 / JCM 16839 / KCTC 5957 / BAV1).